The following is a 54-amino-acid chain: Photosystem II reaction center protein K (54 aa).

Positions 1–17 (MLLEHVTITLLNNTSFA) are excised as a propeptide. Residues 29 to 49 (LIDVLPIIPLLFLLLAFVWQA) traverse the membrane as a helical segment.

It belongs to the PsbK family. In terms of assembly, PSII is composed of 1 copy each of membrane proteins PsbA, PsbB, PsbC, PsbD, PsbE, PsbF, PsbH, PsbI, PsbJ, PsbK, PsbL, PsbM, PsbT, PsbY, PsbZ, Psb30/Ycf12, at least 3 peripheral proteins of the oxygen-evolving complex and a large number of cofactors. It forms dimeric complexes.

The protein localises to the plastid. The protein resides in the chloroplast thylakoid membrane. Functionally, one of the components of the core complex of photosystem II (PSII). PSII is a light-driven water:plastoquinone oxidoreductase that uses light energy to abstract electrons from H(2)O, generating O(2) and a proton gradient subsequently used for ATP formation. It consists of a core antenna complex that captures photons, and an electron transfer chain that converts photonic excitation into a charge separation. The protein is Photosystem II reaction center protein K of Euglena mutabilis.